The following is a 217-amino-acid chain: MGRRPARCYRYCKNKPYIKSRYCRGVPDAKIRIFDLGRKKASTDEFPLCVHLISLEKEQLSSEAIEAGRISCNKYISKTGGKDSFHMRVRVHPWHVLRINKMLSCAGADRLQTGMRGAFGKPMGTVARVNIGQIIFSIRTRDNMLANVVEALRRSSYKFPGRQKIVVSKKWGFTAYNREAYQKLKADGRLMNDGANVKVITNHGTLAQYAKDIAAAN.

Belongs to the universal ribosomal protein uL16 family. Component of the small ribosomal subunit. Mature ribosomes consist of a small (40S) and a large (60S) subunit. The 40S subunit contains about 33 different proteins and 1 molecule of RNA (18S). The 60S subunit contains about 49 different proteins and 3 molecules of RNA (25S, 5.8S and 5S).

The sequence is that of Large ribosomal subunit protein uL16 (rpl10) from Dictyostelium discoideum (Social amoeba).